Reading from the N-terminus, the 117-residue chain is Early E3 13.3 kDa protein (117 aa).

This chain is Early E3 13.3 kDa protein, found in Canine adenovirus serotype 1 (strain Glaxo) (CAdV-1).